The sequence spans 322 residues: Coelomocyte uptake defective protein 15 (322 aa).

Positions 1–20 (MVNSLSRILFCSLLIFSVIS) are cleaved as a signal peptide. N-linked (GlcNAc...) asparagine glycans are attached at residues Asn-62, Asn-98, Asn-144, Asn-170, Asn-180, Asn-183, and Asn-222. Residues 244-264 (LFGIMITFGTLLLLTALFYAA) form a helical membrane-spanning segment.

It belongs to the OSTM1 family.

It localises to the membrane. Modulates the transport of substances from the endosomal to lysosomal compartments. Plays a role in lysosome formation and function in coelomocytes. In Caenorhabditis elegans, this protein is Coelomocyte uptake defective protein 15.